The following is a 904-amino-acid chain: Protein translocase subunit SecA (904 aa).

ATP contacts are provided by residues Q89, 107 to 111, and D496; that span reads GEGKT. A disordered region spans residues 870 to 904; it reads GGFQELSSGTPSPTVTVTTSSGGGTERKTSRRRKR. A compositionally biased stretch (low complexity) spans 876–889; sequence SSGTPSPTVTVTTS.

Belongs to the SecA family. In terms of assembly, monomer and homodimer. Part of the essential Sec protein translocation apparatus which comprises SecA, SecYEG and auxiliary proteins SecDF. Other proteins may also be involved.

It localises to the cell inner membrane. The protein localises to the cytoplasm. It catalyses the reaction ATP + H2O + cellular proteinSide 1 = ADP + phosphate + cellular proteinSide 2.. Part of the Sec protein translocase complex. Interacts with the SecYEG preprotein conducting channel. Has a central role in coupling the hydrolysis of ATP to the transfer of proteins into and across the cell membrane, serving as an ATP-driven molecular motor driving the stepwise translocation of polypeptide chains across the membrane. The chain is Protein translocase subunit SecA from Leptospira borgpetersenii serovar Hardjo-bovis (strain JB197).